The following is a 129-amino-acid chain: Venom CUB domain-containing protein 1 (129 aa).

The signal sequence occupies residues 1–18 (MKLLGVLITIYCIASTLA). Residues 19 to 121 (IDVNVPSNGM…KASCKAYSIT (103 aa)) enclose the CUB domain. A disulfide bridge connects residues Cys66 and Cys83.

It belongs to the venom CUB family. In terms of processing, contains 2 disulfide bonds. As to expression, expressed by the venom gland.

The protein resides in the secreted. The chain is Venom CUB domain-containing protein 1 from Platymeris rhadamanthus (Red spot assassin bug).